Reading from the N-terminus, the 304-residue chain is ATP phosphoribosyltransferase (304 aa).

This sequence belongs to the ATP phosphoribosyltransferase family. Long subfamily. Mg(2+) serves as cofactor.

The protein localises to the cytoplasm. The catalysed reaction is 1-(5-phospho-beta-D-ribosyl)-ATP + diphosphate = 5-phospho-alpha-D-ribose 1-diphosphate + ATP. It participates in amino-acid biosynthesis; L-histidine biosynthesis; L-histidine from 5-phospho-alpha-D-ribose 1-diphosphate: step 1/9. With respect to regulation, feedback inhibited by histidine. In terms of biological role, catalyzes the condensation of ATP and 5-phosphoribose 1-diphosphate to form N'-(5'-phosphoribosyl)-ATP (PR-ATP). Has a crucial role in the pathway because the rate of histidine biosynthesis seems to be controlled primarily by regulation of HisG enzymatic activity. In Xanthomonas oryzae pv. oryzae (strain MAFF 311018), this protein is ATP phosphoribosyltransferase.